The primary structure comprises 181 residues: Shikimate kinase (181 aa).

17-22 (GAGKTT) provides a ligand contact to ATP. A Mg(2+)-binding site is contributed by threonine 21. The substrate site is built by aspartate 39, arginine 63, and glycine 85. Arginine 122 is an ATP binding site. Position 141 (arginine 141) interacts with substrate.

It belongs to the shikimate kinase family. In terms of assembly, monomer. Mg(2+) is required as a cofactor.

It localises to the cytoplasm. It catalyses the reaction shikimate + ATP = 3-phosphoshikimate + ADP + H(+). It functions in the pathway metabolic intermediate biosynthesis; chorismate biosynthesis; chorismate from D-erythrose 4-phosphate and phosphoenolpyruvate: step 5/7. Functionally, catalyzes the specific phosphorylation of the 3-hydroxyl group of shikimic acid using ATP as a cosubstrate. The polypeptide is Shikimate kinase (Nostoc sp. (strain PCC 7120 / SAG 25.82 / UTEX 2576)).